A 428-amino-acid polypeptide reads, in one-letter code: Probable anion transporter 6 (428 aa).

An N-terminal signal peptide occupies residues 1–22 (MKFPKRYAIVLLTFMCTNVCYI). Transmembrane regions (helical) follow at residues 47 to 67 (MILS…GWAA), 74 to 94 (LVLL…PLDP), 98 to 118 (ILLV…FPSI), 137 to 157 (LTTS…PSLV), 164 to 184 (SVFS…FKFA), 221 to 241 (ILFS…HYAL), 269 to 289 (LPYL…DHLI), 301 to 321 (KLLN…LPLF), 327 to 347 (AIFC…GFAV), 356 to 376 (FAGI…IVGV), and 401 to 421 (TVFF…LIFS).

This sequence belongs to the major facilitator superfamily. Sodium/anion cotransporter (TC 2.A.1.14) family.

It is found in the cell membrane. Its function is as follows. Probable anion transporter. The sequence is that of Probable anion transporter 6 (PHT4;6) from Oryza sativa subsp. japonica (Rice).